The chain runs to 335 residues: DNA-directed RNA polymerase subunit alpha (335 aa).

The tract at residues 1–248 (MTIQTSRTLS…GLFAPLQEVS (248 aa)) is alpha N-terminal domain (alpha-NTD). Residues 256–335 (KPDEDNQKNQ…LPRTREKGKA (80 aa)) form an alpha C-terminal domain (alpha-CTD) region.

Belongs to the RNA polymerase alpha chain family. In terms of assembly, in cyanobacteria the RNAP catalytic core is composed of 2 alpha, 1 beta, 1 beta', 1 gamma and 1 omega subunit. When a sigma factor is associated with the core the holoenzyme is formed, which can initiate transcription.

The catalysed reaction is RNA(n) + a ribonucleoside 5'-triphosphate = RNA(n+1) + diphosphate. Functionally, DNA-dependent RNA polymerase catalyzes the transcription of DNA into RNA using the four ribonucleoside triphosphates as substrates. The chain is DNA-directed RNA polymerase subunit alpha from Synechococcus sp. (strain JA-2-3B'a(2-13)) (Cyanobacteria bacterium Yellowstone B-Prime).